The following is a 240-amino-acid chain: MELYNIKYAIDPTNKIVIEQVDNVDAFVHILEPGQEVFDETLSRYHQFPGVVSSIIFTQLVLNTIISVLSEDGSLLPLKLENTCFNFHVCNKRFVFGNLPAAIVNNETKQKLRIGSPIFAGEKLVSVVTTFHRVGENEWLLPVTGIQEASRLSGHIKVPNGVRVEKLRPNMSVYGTVQLPYDKIKRHALEQENKTPNALESCVLFYRDSEIRITYNRGDYEIMHLRMPGPLIQPNTIYYS.

Residue His-46 is the Proton donor of the active site. The active-site Shared with catalytic histidine of dimeric partner is the Tyr-181. Lys-185 (proton acceptor; shared with catalytic histidine of dimeric partner) is an active-site residue.

This sequence belongs to the poxin family. As to quaternary structure, homodimer.

It carries out the reaction 2',3'-cGAMP + H2O = Gp(2'-5')Ap(3') + H(+). Functionally, nuclease that cleaves host 2',3'-cGAMP. The chain is Poxin (p26) from Bombyx mori (Silk moth).